The following is a 715-amino-acid chain: Solute carrier organic anion transporter family member 1C1 (715 aa).

Topologically, residues Met1–Lys43 are cytoplasmic. Residues Val44 to Leu63 traverse the membrane as a helical segment. The Extracellular portion of the chain corresponds to Lys64–Gly82. Residues Ile83–Gly103 form a helical membrane-spanning segment. The Cytoplasmic portion of the chain corresponds to Ala104–Pro109. Residues Lys110–Glu134 traverse the membrane as a helical segment. Residues Lys135–Ser187 lie on the Extracellular side of the membrane. Residues Ser188–Asp216 form a helical membrane-spanning segment. Residues Asp217 to Ala235 are Cytoplasmic-facing. A helical membrane pass occupies residues Ile236–Ile256. Residues Gly257–Val274 are Extracellular-facing. A helical membrane pass occupies residues Gly275–Pro299. Residues Lys300–Thr351 are Cytoplasmic-facing. Residues Leu352–Phe373 form a helical membrane-spanning segment. Over Gly374–Lys393 the chain is Extracellular. Residues Ala394–Met417 traverse the membrane as a helical segment. Residues Lys418–Arg421 lie on the Cytoplasmic side of the membrane. Residues Leu422 to Leu445 form a helical membrane-spanning segment. The Extracellular segment spans residues Phe446 to Phe557. An N-linked (GlcNAc...) asparagine glycan is attached at Asn452. One can recognise a Kazal-like domain in the interval Arg473–Gly528. 3 cysteine pairs are disulfide-bonded: Cys479–Cys509, Cys485–Cys505, and Cys494–Cys526. Residues Asn523 and Asn536 are each glycosylated (N-linked (GlcNAc...) asparagine). Residues Leu558–Leu580 form a helical membrane-spanning segment. Topologically, residues Arg581–Ser589 are cytoplasmic. Residues Phe590–Ile615 form a helical membrane-spanning segment. Residues Asp616 to Thr649 lie on the Extracellular side of the membrane. A helical membrane pass occupies residues Thr650–Leu667. Residues Lys668–Leu715 are Cytoplasmic-facing.

The protein belongs to the organo anion transporter (TC 2.A.60) family. Widely expressed throughout the brain except in the cerebellum. Not detected in kidney, heart, lung, skeletal muscle, spleen, liver, nor testis. Highly expressed in cerebral microvessels throughout the brain and in the choroid plexus (at mRNA and protein level).

The protein localises to the cell membrane. It carries out the reaction 3,3',5'-triiodo-L-thyronine(out) = 3,3',5'-triiodo-L-thyronine(in). It catalyses the reaction L-thyroxine(out) = L-thyroxine(in). The catalysed reaction is L-thyroxine sulfate(out) = L-thyroxine sulfate(in). The enzyme catalyses 17beta-estradiol 17-O-(beta-D-glucuronate)(out) = 17beta-estradiol 17-O-(beta-D-glucuronate)(in). It carries out the reaction 3,3',5-triiodo-L-thyronine(out) = 3,3',5-triiodo-L-thyronine(in). Functionally, mediates the Na(+)-independent high affinity transport of thyroid hormones at the plasma membrane of brain capillary endothelial cells. The transport activity of substrates L-thyroxine (T4) and 3,3',5'-triiodo-L-thyronine (reverse T3, rT3) is much greater than that of 3,3',5-triiodo-L-thyronine (T3). The prehormone, T4, is the major form in the circulating blood and is converted to the active form, T3, by the iodothyronine-deiodinase in peripheral organs. T3 plays an essential role in brain development via binding to specific nuclear receptors (thyroid hormone receptor). Also transports organic anions such as the conjugated steroid 17-beta-glucuronosyl estradiol (17beta-estradiol 17-O-(beta-D-glucuronate)). Transports T4 and estrone-3-sulfate in a pH-insensitive manner. May serve as a drug efflux system at the blood brain barrier. The chain is Solute carrier organic anion transporter family member 1C1 (Slco1c1) from Mus musculus (Mouse).